We begin with the raw amino-acid sequence, 848 residues long: Neurofilament medium polypeptide (848 aa).

The segment covering 1–10 (MSYTLDSLGN) has biased composition (polar residues). The interval 1–51 (MSYTLDSLGNPSAYRRVTETRSSFSRVSGSPSSGFRSQSWSRGSPSTVSSS) is disordered. S2 is subject to N-acetylserine. The head stretch occupies residues 2-102 (SYTLDSLGNP…KLSRSNEKEQ (101 aa)). Over residues 21 to 44 (RSSFSRVSGSPSSGFRSQSWSRGS) the composition is skewed to low complexity. Position 30 is a phosphoserine (S30). At R42 the chain carries Omega-N-methylarginine. T47 is a glycosylation site (O-linked (GlcNAc) threonine). Residue S97 is modified to Phosphoserine. Residues 99-410 (EKEQLQGLND…KLLEGEETRF (312 aa)) form the IF rod domain. The interval 103–134 (LQGLNDRFAGYIEKVHYLEQQNKEIEAEIQAL) is coil 1A. The interval 135–147 (RQKQASHAQLGDA) is linker 1. The interval 148-246 (YDQEIRELRA…EEEVADLLAQ (99 aa)) is coil 1B. Position 224 is a phosphoserine (S224). The interval 247–263 (IQASHITVERKDYLKTD) is linker 12. The tract at residues 264-285 (ISTALKEIRSQLECHSDQNMHQ) is coil 2A. The linker 2 stretch occupies residues 286–289 (AEEW). Residues 290-410 (FKCRYAKLTE…KLLEGEETRF (121 aa)) are coil 2B. Residue Y318 is modified to Phosphotyrosine. S344, S416, and S428 each carry phosphoserine. The tract at residues 411 to 848 (STFSGSITGP…AIVKEVTQGD (438 aa)) is tail. O-linked (GlcNAc) threonine glycosylation occurs at T430. Phosphoserine occurs at positions 466 and 482. Residues 482–785 (SAKEEKEEAE…GEDSSDDKVV (304 aa)) are disordered. A compositionally biased stretch (acidic residues) spans 488–498 (EEAEEKEEEPE). A compositionally biased stretch (basic and acidic residues) spans 499-509 (AEKSPVKSPEA). S502 and S506 each carry phosphoserine. A compositionally biased stretch (acidic residues) spans 510 to 533 (KEEEEEGEKEEEEEGQEEEEEEDE). Positions 534 to 553 (GVKSDQAEEGGSEKEGSSEK) are enriched in basic and acidic residues. Residues S537, S545, S550, and S551 each carry the phosphoserine modification. Positions 554–576 (DEGEQEEEEGETEAEGEGEEAEA) are enriched in acidic residues. T565 is subject to Phosphothreonine. The span at 577-604 (KEEKKIEGKVEEVAVKEEIKVEKPEKAK) shows a compositional bias: basic and acidic residues. S605 and S610 each carry phosphoserine. Basic and acidic residues-rich tracts occupy residues 611–677 (PVEE…KAVE) and 689–711 (SLEKDTKEEKPQPQEKVKEKAEE). Residue T642 is modified to Phosphothreonine. Phosphoserine occurs at positions 645, 669, 689, 715, 723, 753, and 769. Composition is skewed to basic and acidic residues over residues 720 to 732 (SDRSPQESKKEDI) and 748 to 760 (TQEKGSGREEEKG). Positions 771-785 (AEEKKGEDSSDDKVV) are enriched in basic and acidic residues.

This sequence belongs to the intermediate filament family. Forms heterodimers with NEFL; which can further hetero-oligomerize (in vitro). Forms heterodimers with INA (in vitro). In terms of processing, there are a number of repeats of the tripeptide K-S-P, NFM is phosphorylated on a number of the serines in this motif. It is thought that phosphorylation of NFM results in the formation of interfilament cross bridges that are important in the maintenance of axonal caliber. Post-translationally, phosphorylation seems to play a major role in the functioning of the larger neurofilament polypeptides (NF-M and NF-H), the levels of phosphorylation being altered developmentally and coincidentally with a change in the neurofilament function. Phosphorylated in the head and rod regions by the PKC kinase PKN1, leading to the inhibition of polymerization. As to expression, expressed in the sciatic nerve (at protein level).

It is found in the cytoplasm. The protein localises to the cytoskeleton. Its subcellular location is the cell projection. The protein resides in the axon. In terms of biological role, neurofilaments usually contain three intermediate filament proteins: NEFL, NEFM, and NEFH which are involved in the maintenance of neuronal caliber. May additionally cooperate with the neuronal intermediate filament proteins PRPH and INA to form neuronal filamentous networks. This is Neurofilament medium polypeptide (Nefm) from Mus musculus (Mouse).